The primary structure comprises 265 residues: Undecaprenyl-diphosphatase 1 (265 aa).

The next 7 membrane-spanning stretches (helical) occupy residues 4–24 (IITA…PISS), 42–62 (AKTF…ILYH), 84–104 (FHVF…HDII), 108–128 (LFQP…MIFA), 184–204 (SEFS…LDLL), 217–237 (MFAV…VTFL), and 245–265 (LKPF…FVLL).

The protein belongs to the UppP family.

It localises to the cell membrane. It carries out the reaction di-trans,octa-cis-undecaprenyl diphosphate + H2O = di-trans,octa-cis-undecaprenyl phosphate + phosphate + H(+). In terms of biological role, catalyzes the dephosphorylation of undecaprenyl diphosphate (UPP). Confers resistance to bacitracin. This Bacillus thuringiensis subsp. konkukian (strain 97-27) protein is Undecaprenyl-diphosphatase 1.